The sequence spans 106 residues: MNQIINGIPVTYILGLAGILFSIGVLGVLIRRNIVIIFMSVELILNSVNLVFVTFSKALSHINGETIVFFVMAIAAAEAAVGLALVIAIFRHKKSTNVDELQSMKW.

3 consecutive transmembrane segments (helical) span residues 10–30, 34–54, and 67–87; these read VTYI…GVLI, IVII…VFVT, and IVFF…ALVI.

The protein belongs to the complex I subunit 4L family. In terms of assembly, NDH-1 is composed of 14 different subunits. Subunits NuoA, H, J, K, L, M, N constitute the membrane sector of the complex.

Its subcellular location is the cell inner membrane. The catalysed reaction is a quinone + NADH + 5 H(+)(in) = a quinol + NAD(+) + 4 H(+)(out). Its function is as follows. NDH-1 shuttles electrons from NADH, via FMN and iron-sulfur (Fe-S) centers, to quinones in the respiratory chain. The immediate electron acceptor for the enzyme in this species is believed to be ubiquinone. Couples the redox reaction to proton translocation (for every two electrons transferred, four hydrogen ions are translocated across the cytoplasmic membrane), and thus conserves the redox energy in a proton gradient. The chain is NADH-quinone oxidoreductase subunit K from Leptospira biflexa serovar Patoc (strain Patoc 1 / Ames).